The sequence spans 447 residues: UDP-N-acetylmuramoylalanine--D-glutamate ligase (447 aa).

130–136 is a binding site for ATP; sequence GTSGKTT.

It belongs to the MurCDEF family.

The protein resides in the cytoplasm. The catalysed reaction is UDP-N-acetyl-alpha-D-muramoyl-L-alanine + D-glutamate + ATP = UDP-N-acetyl-alpha-D-muramoyl-L-alanyl-D-glutamate + ADP + phosphate + H(+). It functions in the pathway cell wall biogenesis; peptidoglycan biosynthesis. Its function is as follows. Cell wall formation. Catalyzes the addition of glutamate to the nucleotide precursor UDP-N-acetylmuramoyl-L-alanine (UMA). The polypeptide is UDP-N-acetylmuramoylalanine--D-glutamate ligase (Oleidesulfovibrio alaskensis (strain ATCC BAA-1058 / DSM 17464 / G20) (Desulfovibrio alaskensis)).